Reading from the N-terminus, the 458-residue chain is GTPase Obg (458 aa).

One can recognise an Obg domain in the interval 1-157 (MSFLDRVKIY…ITLYLELKVL (157 aa)). Positions 158 to 326 (ADLGLVGFPN…VLNEIVKVIS (169 aa)) constitute an OBG-type G domain. GTP is bound by residues 164–171 (GFPNAGKS), 189–193 (FTTLN), 210–213 (DIPG), 280–283 (NKAD), and 307–309 (SAA). S171 and T191 together coordinate Mg(2+). The 79-residue stretch at 341–419 (AVHGVEPLFK…VGQKEFEWSG (79 aa)) folds into the OCT domain. The segment at 420–458 (TELDSERAEQPDFEGYKRRTTQAERLEKRRQRRLKKEEK) is disordered. Positions 423 to 446 (DSERAEQPDFEGYKRRTTQAERLE) are enriched in basic and acidic residues. Residues 447–458 (KRRQRRLKKEEK) are compositionally biased toward basic residues.

This sequence belongs to the TRAFAC class OBG-HflX-like GTPase superfamily. OBG GTPase family. As to quaternary structure, monomer. Mg(2+) serves as cofactor.

It is found in the cytoplasm. An essential GTPase which binds GTP, GDP and possibly (p)ppGpp with moderate affinity, with high nucleotide exchange rates and a fairly low GTP hydrolysis rate. Plays a role in control of the cell cycle, stress response, ribosome biogenesis and in those bacteria that undergo differentiation, in morphogenesis control. The protein is GTPase Obg of Elusimicrobium minutum (strain Pei191).